We begin with the raw amino-acid sequence, 107 residues long: Phosphoribosyl-ATP pyrophosphatase (107 aa).

This sequence belongs to the PRA-PH family.

The protein resides in the cytoplasm. The catalysed reaction is 1-(5-phospho-beta-D-ribosyl)-ATP + H2O = 1-(5-phospho-beta-D-ribosyl)-5'-AMP + diphosphate + H(+). It functions in the pathway amino-acid biosynthesis; L-histidine biosynthesis; L-histidine from 5-phospho-alpha-D-ribose 1-diphosphate: step 2/9. This chain is Phosphoribosyl-ATP pyrophosphatase (hisE), found in Mesorhizobium japonicum (strain LMG 29417 / CECT 9101 / MAFF 303099) (Mesorhizobium loti (strain MAFF 303099)).